We begin with the raw amino-acid sequence, 667 residues long: MIYKMAHVQLLLLYFFVSTVKAFYLPGVAPTTYRENDNIPLLVNHLTPSMNYQHKDEDGNNVSGDKENFLYSYDYYYNRFHFCQPEKVEKQPESLGSVIFGDRIYNSPFQLNMLQEKECESLCKTVIPGDDAKFINKLIKNGFFQNWLIDGLPAAREVYDGRTKTSFYGAGFNLGFVQVTQGTDIEATPKGAETTDKDVELETRNDRNMVKTYELPYFANHFDIMIEYHDRGEGNYRVVGVIVEPVSIKRSSPGTCETTGSPLMLDEGNDNEVYFTYSVKFNESATSWATRWDKYLHVYDPSIQWFSLINFSLVVVLLSSVVIHSLLRALKSDFARYNELNLDDDFQEDSGWKLNHGDVFRSPSQSLTLSILVGSGVQLFLMVTCSIFFAALGFLSPSSRGSLATVMFILYALFGFVGSYTSMGIYKFFNGPYWKANLILTPLLVPGAILLIIIALNFFLMFVHSSGVIPASTLFFMVFLWFLFSIPLSFAGSLIARKRCHWDEHPTKTNQIARQIPFQPWYLKTIPATLIAGIFPFGSIAVELYFIYTSLWFNKIFYMFGFLFFSFLLLTLTSSLVTILITYHSLCLENWKWQWRGFIIGGAGCALYVFIHSILFTKFKLGGFTTIVLYVGYSSVISLLCCLVTGSIGFISSMLFVRKIYSSIKVD.

Positions 1-22 are cleaved as a signal peptide; sequence MIYKMAHVQLLLLYFFVSTVKA. Over 23–302 the chain is Lumenal; sequence FYLPGVAPTT…DKYLHVYDPS (280 aa). N-linked (GlcNAc...) asparagine glycans are attached at residues Asn-61 and Asn-282. Residues 303 to 323 traverse the membrane as a helical segment; the sequence is IQWFSLINFSLVVVLLSSVVI. The Cytoplasmic portion of the chain corresponds to 324 to 370; it reads HSLLRALKSDFARYNELNLDDDFQEDSGWKLNHGDVFRSPSQSLTLS. The chain crosses the membrane as a helical span at residues 371–391; the sequence is ILVGSGVQLFLMVTCSIFFAA. Residues 392-405 are Lumenal-facing; that stretch reads LGFLSPSSRGSLAT. The chain crosses the membrane as a helical span at residues 406–426; the sequence is VMFILYALFGFVGSYTSMGIY. Topologically, residues 427-442 are cytoplasmic; it reads KFFNGPYWKANLILTP. A helical membrane pass occupies residues 443–463; that stretch reads LLVPGAILLIIIALNFFLMFV. Residues 464-474 lie on the Lumenal side of the membrane; the sequence is HSSGVIPASTL. Residues 475 to 495 traverse the membrane as a helical segment; the sequence is FFMVFLWFLFSIPLSFAGSLI. Residues 496-527 lie on the Cytoplasmic side of the membrane; that stretch reads ARKRCHWDEHPTKTNQIARQIPFQPWYLKTIP. The helical transmembrane segment at 528-548 threads the bilayer; that stretch reads ATLIAGIFPFGSIAVELYFIY. The Lumenal segment spans residues 549–560; it reads TSLWFNKIFYMF. The helical transmembrane segment at 561 to 581 threads the bilayer; sequence GFLFFSFLLLTLTSSLVTILI. At 582–596 the chain is on the cytoplasmic side; the sequence is TYHSLCLENWKWQWR. A helical transmembrane segment spans residues 597-617; that stretch reads GFIIGGAGCALYVFIHSILFT. Over 618–635 the chain is Lumenal; it reads KFKLGGFTTIVLYVGYSS. Residues 636–656 form a helical membrane-spanning segment; sequence VISLLCCLVTGSIGFISSMLF. The Cytoplasmic segment spans residues 657 to 667; the sequence is VRKIYSSIKVD.

This sequence belongs to the nonaspanin (TM9SF) (TC 9.A.2) family.

It localises to the endosome membrane. The protein localises to the vacuole membrane. Functionally, with TMN2 and TMN3, plays a critical role in the late stages of a nutrient-controlled pathway notably regulating FLO11 gene expression. Acts downstream of RAS2 and TOR. Essential for cell adhesion and filamentous growth. May play a role as effector of cellular copper homeostasis. The sequence is that of Transmembrane 9 superfamily member 1 (EMP70) from Saccharomyces cerevisiae (strain ATCC 204508 / S288c) (Baker's yeast).